A 203-amino-acid polypeptide reads, in one-letter code: uncharacterized protein (203 aa).

Residues 9 to 29 (LVVLFTIVTFGLVSPPAALMA) traverse the membrane as a helical segment.

Its subcellular location is the membrane. This is an uncharacterized protein from Bacillus subtilis (strain 168).